Consider the following 412-residue polypeptide: Transcription termination factor 3, mitochondrial (412 aa).

Residues 1-67 (MALLAQQLPR…IKTYRTLFWN (67 aa)) constitute a mitochondrion transit peptide.

The protein belongs to the mTERF family.

It localises to the mitochondrion. In terms of biological role, binds promoter DNA and regulates initiation of transcription. Required for normal mitochondrial transcription and translation, and for normal assembly of mitochondrial respiratory complexes. Required for normal mitochondrial function. Maintains 16S rRNA levels and functions in mitochondrial ribosome assembly by regulating the biogenesis of the 39S ribosomal subunit. The sequence is that of Transcription termination factor 3, mitochondrial (Mterf3) from Mus musculus (Mouse).